The sequence spans 317 residues: Ribosomal RNA small subunit methyltransferase H (317 aa).

Residues 32–34 (GGH), Asp51, Phe78, Asp99, and Gln106 contribute to the S-adenosyl-L-methionine site.

This sequence belongs to the methyltransferase superfamily. RsmH family.

The protein resides in the cytoplasm. The enzyme catalyses cytidine(1402) in 16S rRNA + S-adenosyl-L-methionine = N(4)-methylcytidine(1402) in 16S rRNA + S-adenosyl-L-homocysteine + H(+). In terms of biological role, specifically methylates the N4 position of cytidine in position 1402 (C1402) of 16S rRNA. The protein is Ribosomal RNA small subunit methyltransferase H of Helicobacter hepaticus (strain ATCC 51449 / 3B1).